The primary structure comprises 403 residues: D-mannonate dehydratase Caul1427 (403 aa).

Substrate contacts are provided by Asn38 and His123. Catalysis depends on Tyr160, which acts as the Proton donor/acceptor. A Mg(2+)-binding site is contributed by Asp211. His213 serves as the catalytic Proton donor/acceptor. Glu237 and Glu263 together coordinate Mg(2+). 5 residues coordinate substrate: Glu263, Arg284, His313, Asp317, and Glu340.

The protein belongs to the mandelate racemase/muconate lactonizing enzyme family. GalD subfamily. The cofactor is Mg(2+).

It carries out the reaction D-mannonate = 2-dehydro-3-deoxy-D-gluconate + H2O. Its pathway is carbohydrate metabolism; pentose and glucuronate interconversion. Its function is as follows. Catalyzes the dehydration of D-mannonate. Has no detectable activity with a panel of 70 other acid sugars (in vitro). The polypeptide is D-mannonate dehydratase Caul1427 (Caulobacter sp. (strain K31)).